We begin with the raw amino-acid sequence, 509 residues long: ATP synthase subunit alpha (509 aa).

169 to 176 (GDRQTGKT) contributes to the ATP binding site.

This sequence belongs to the ATPase alpha/beta chains family. F-type ATPases have 2 components, CF(1) - the catalytic core - and CF(0) - the membrane proton channel. CF(1) has five subunits: alpha(3), beta(3), gamma(1), delta(1), epsilon(1). CF(0) has three main subunits: a(1), b(2) and c(9-12). The alpha and beta chains form an alternating ring which encloses part of the gamma chain. CF(1) is attached to CF(0) by a central stalk formed by the gamma and epsilon chains, while a peripheral stalk is formed by the delta and b chains.

Its subcellular location is the cell inner membrane. The enzyme catalyses ATP + H2O + 4 H(+)(in) = ADP + phosphate + 5 H(+)(out). Produces ATP from ADP in the presence of a proton gradient across the membrane. The alpha chain is a regulatory subunit. In Brucella melitensis biotype 1 (strain ATCC 23456 / CCUG 17765 / NCTC 10094 / 16M), this protein is ATP synthase subunit alpha.